The primary structure comprises 199 residues: Pectinesterase inhibitor 4 (199 aa).

An N-terminal signal peptide occupies residues 1–25 (MLRFVVLSLTLMVFINSSNFPKTAA). N-linked (GlcNAc...) asparagine glycosylation is found at asparagine 16, asparagine 33, asparagine 43, and asparagine 83. Cysteine 42 and cysteine 51 are disulfide-bonded. Cysteine 109 and cysteine 158 are disulfide-bonded.

It belongs to the PMEI family. In terms of assembly, binds reversibly to PME3 to inhibit its activity; the stability of the PME3-PMEI4 complex and the inhibition of the pectin methylesterase (PME) activity is pH-dependent, based on protonation status of amino-acids at the complex interface. As to expression, expressed in outer cell layer of roots, particularly in the root-hair zone. Expressed in roots and siliques.

It is found in the secreted. It localises to the extracellular space. The protein resides in the apoplast. Functionally, pectin methylesterase (PME) inhibitor that can target the root-expressed PME17 and PME3 in a pH-dependent manner, mainly in slightly acidic conditions (pH 6.3 and 5.0) but not at pH 7.5; this processus relies on changes in the protonation of amino acids involved in intermolecular and intramolecular interactions. Regulate de-methylesterification of pectins in roots and affects root growth. The sequence is that of Pectinesterase inhibitor 4 from Arabidopsis thaliana (Mouse-ear cress).